The sequence spans 155 residues: Endoribonuclease YbeY (155 aa).

Residues H114, H118, and H124 each coordinate Zn(2+).

This sequence belongs to the endoribonuclease YbeY family. Zn(2+) serves as cofactor.

It localises to the cytoplasm. Single strand-specific metallo-endoribonuclease involved in late-stage 70S ribosome quality control and in maturation of the 3' terminus of the 16S rRNA. The polypeptide is Endoribonuclease YbeY (Escherichia coli O7:K1 (strain IAI39 / ExPEC)).